The primary structure comprises 345 residues: MTTPTPLSYKDAGVDIDAGNALVNNIKSAVKRTRRPEVMGNLGGFGALCELPTKYKHPVLVSGTDGVGTKLRLAIDYKKHDTVGVDLVAMCVNDLIVSGAEPLFFLDYYATGKLDVETATSVVSGIAEGCFQSGCALIGGETAEMPGMYEGEDYDLAGFCVGVVEKADIIDGTKVKAGDSLIALASSGPHSNGYSLIRKVLEVSKADPQQDLAGKPLIDHLLEPTRIYVKPLLKLIEQSDIHAMAHITGGGFWENIPRVLPDDCKAVVKGDSWKWPVVFDWLMTNGNIAQHEMFLTFNCGVGMVIALPTEKVDAALALLTAEGENAWLIGEIATRQGDEEQVEII.

This sequence belongs to the AIR synthase family.

The protein resides in the cytoplasm. It catalyses the reaction 2-formamido-N(1)-(5-O-phospho-beta-D-ribosyl)acetamidine + ATP = 5-amino-1-(5-phospho-beta-D-ribosyl)imidazole + ADP + phosphate + H(+). Its pathway is purine metabolism; IMP biosynthesis via de novo pathway; 5-amino-1-(5-phospho-D-ribosyl)imidazole from N(2)-formyl-N(1)-(5-phospho-D-ribosyl)glycinamide: step 2/2. The protein is Phosphoribosylformylglycinamidine cyclo-ligase of Shewanella frigidimarina (strain NCIMB 400).